We begin with the raw amino-acid sequence, 282 residues long: Hydroxyacylglutathione hydrolase-like protein (282 aa).

Residues His-54, His-56, Asp-58, His-59, His-110, Asp-134, and His-173 each coordinate Zn(2+).

The protein belongs to the metallo-beta-lactamase superfamily. Glyoxalase II family. Zn(2+) serves as cofactor.

Its function is as follows. Hydrolase acting on ester bonds. This is Hydroxyacylglutathione hydrolase-like protein (HAGHL) from Gallus gallus (Chicken).